The chain runs to 122 residues: MIQQESRLKVADNSGAREVLTIKVLGGSGRKTANIGDVIVCTVKQATPGGVVKKGEVVRAVVVRTKRGVRRKDGSYIRFDENAAVIIKDDKSPRGTRIFGPVARELREKDFMKIVSLAPEVL.

This sequence belongs to the universal ribosomal protein uL14 family. In terms of assembly, part of the 50S ribosomal subunit. Forms a cluster with proteins L3 and L19. In the 70S ribosome, L14 and L19 interact and together make contacts with the 16S rRNA in bridges B5 and B8.

Functionally, binds to 23S rRNA. Forms part of two intersubunit bridges in the 70S ribosome. This is Large ribosomal subunit protein uL14 from Exiguobacterium sibiricum (strain DSM 17290 / CCUG 55495 / CIP 109462 / JCM 13490 / 255-15).